Here is a 447-residue protein sequence, read N- to C-terminus: uncharacterized protein (447 aa).

The disordered stretch occupies residues 39–76 (PQAAPYTRNNGMGECRRGHRQGHRAEVHDNRPADKVGQ). The segment covering 61–72 (HRAEVHDNRPAD) has biased composition (basic and acidic residues).

The protein belongs to the 3-oxoacid CoA-transferase subunit A family.

This is an uncharacterized protein from Archaeoglobus fulgidus (strain ATCC 49558 / DSM 4304 / JCM 9628 / NBRC 100126 / VC-16).